The chain runs to 166 residues: MANTDAQNDGLREKLVAINRVAKVVKGGRQFGFTALAVVGDGDGQVGFGYGKAREVPAAIQKAMEKARANMKRVHLDGGTLQYAVTANHGSSKVYMQPASAGTGIIAGGAMRAVFEVVGVQDVLAKAIGSRNPINVVRATIKGLTDVDSPDAVAARRGKKVEDIVG.

The S5 DRBM domain occupies 11–74 (LREKLVAINR…EKARANMKRV (64 aa)).

It belongs to the universal ribosomal protein uS5 family. As to quaternary structure, part of the 30S ribosomal subunit. Contacts proteins S4 and S8.

In terms of biological role, with S4 and S12 plays an important role in translational accuracy. Located at the back of the 30S subunit body where it stabilizes the conformation of the head with respect to the body. This is Small ribosomal subunit protein uS5 from Alkalilimnicola ehrlichii (strain ATCC BAA-1101 / DSM 17681 / MLHE-1).